A 500-amino-acid polypeptide reads, in one-letter code: Pyridine nucleotide-disulfide oxidoreductase domain-containing protein 1 (500 aa).

N-acetylmethionine is present on methionine 1. The disordered stretch occupies residues 211 to 235 (TRYTTEGRKKEARSKSKADNVGSAL). The segment covering 213–228 (YTTEGRKKEARSKSKA) has biased composition (basic and acidic residues).

It belongs to the class-I pyridine nucleotide-disulfide oxidoreductase family. PYROXD1 subfamily. FAD serves as cofactor.

The protein resides in the nucleus. The protein localises to the cytoplasm. It is found in the myofibril. Its subcellular location is the sarcomere. Functionally, probable FAD-dependent oxidoreductase; involved in the cellular oxidative stress response. Required for normal sarcomere structure and muscle fiber integrity. The chain is Pyridine nucleotide-disulfide oxidoreductase domain-containing protein 1 (PYROXD1) from Homo sapiens (Human).